The chain runs to 344 residues: Methionine synthase (344 aa).

Positions 211, 213, 236, and 315 each coordinate Zn(2+).

Belongs to the archaeal MetE family. Zn(2+) serves as cofactor.

Its pathway is amino-acid biosynthesis; L-methionine biosynthesis via de novo pathway. In terms of biological role, catalyzes the transfer of a methyl group to L-homocysteine resulting in methionine formation. The physiological methyl donor is unknown. The chain is Methionine synthase from Thermoplasma volcanium (strain ATCC 51530 / DSM 4299 / JCM 9571 / NBRC 15438 / GSS1).